The following is a 536-amino-acid chain: Chaperonin GroEL (536 aa).

ATP-binding positions include 29-32, 86-90, Gly-413, 476-478, and Asp-492; these read TLGP, DGTTT, and DAA.

It belongs to the chaperonin (HSP60) family. Forms a cylinder of 14 subunits composed of two heptameric rings stacked back-to-back. Interacts with the co-chaperonin GroES.

It is found in the cytoplasm. It carries out the reaction ATP + H2O + a folded polypeptide = ADP + phosphate + an unfolded polypeptide.. Functionally, together with its co-chaperonin GroES, plays an essential role in assisting protein folding. The GroEL-GroES system forms a nano-cage that allows encapsulation of the non-native substrate proteins and provides a physical environment optimized to promote and accelerate protein folding. The polypeptide is Chaperonin GroEL (Methanococcus vannielii (strain ATCC 35089 / DSM 1224 / JCM 13029 / OCM 148 / SB)).